The sequence spans 693 residues: Putative adenosylcobalamin-dependent ribonucleoside-triphosphate reductase (693 aa).

A disulfide bridge connects residues Cys90 and Cys386. Residues Cys375 and Glu377 contribute to the active site.

This sequence belongs to the class II ribonucleoside-triphosphate reductase family. Adenosylcob(III)alamin serves as cofactor.

It catalyses the reaction a 2'-deoxyribonucleoside 5'-triphosphate + [thioredoxin]-disulfide + H2O = a ribonucleoside 5'-triphosphate + [thioredoxin]-dithiol. The polypeptide is Putative adenosylcobalamin-dependent ribonucleoside-triphosphate reductase (50) (Mycobacterium phage D29 (Mycobacteriophage D29)).